The sequence spans 128 residues: Pi-hexatoxin-Hi1c (128 aa).

The first 19 residues, 1–19 (MKLRITLALTSVLAFCVFG), serve as a signal peptide directing secretion. Positions 20 to 47 (DKENENLMENLLEDDLLDIFTDAIHMER) are excised as a propeptide. Disulfide bonds link C54–C69, C61–C74, C68–C84, C93–C108, C100–C113, and C107–C124. Domain repeat units follow at residues 54-84 (CIAKWKSCAGRKLDCCEGLECWKRRWGHEVC) and 93-124 (CLEKWKSCFERKYDCCEELECWERRGNKHPVC). The tract at residues 54–124 (CIAKWKSCAG…ERRGNKHPVC (71 aa)) is 2 X approximate repeats with cysteine pattern C-C-CC-C-C.

The protein belongs to the psalmotoxin-1 family. Double-knot toxin subfamily. In terms of tissue distribution, expressed by the venom gland.

The protein resides in the secreted. This toxin potently and selectively inhibits ASIC1a, an isoform of the gene ASIC1. It incompletely inhibits ASIC1a activation in a pH-independent and slowly reversible manner. This toxin acts by binding to and stabilizing the closed state of the channel, thereby impeding the transition into a conducting state. This toxin may bind to the acidic pocket of ASIC1a, since mutation of a key residue of this pocket (Arg-350) abolishes the ability of the toxin to inhibit ASIC1a. In vivo, this toxin protects the brain from neuronal injury when administered up to 8 hours after stroke onset. The chain is Pi-hexatoxin-Hi1c from Hadronyche infensa (Fraser island funnel-web spider).